The chain runs to 601 residues: Elongation factor 4 (601 aa).

Residues 5-188 (SHIRNFAIIA…ALVLRLPPPT (184 aa)) form the tr-type G domain. Residues 17–22 (DHGKST) and 135–138 (NKID) contribute to the GTP site.

It belongs to the TRAFAC class translation factor GTPase superfamily. Classic translation factor GTPase family. LepA subfamily.

The protein localises to the cell inner membrane. It catalyses the reaction GTP + H2O = GDP + phosphate + H(+). Its function is as follows. Required for accurate and efficient protein synthesis under certain stress conditions. May act as a fidelity factor of the translation reaction, by catalyzing a one-codon backward translocation of tRNAs on improperly translocated ribosomes. Back-translocation proceeds from a post-translocation (POST) complex to a pre-translocation (PRE) complex, thus giving elongation factor G a second chance to translocate the tRNAs correctly. Binds to ribosomes in a GTP-dependent manner. The sequence is that of Elongation factor 4 from Rhodospirillum rubrum (strain ATCC 11170 / ATH 1.1.1 / DSM 467 / LMG 4362 / NCIMB 8255 / S1).